The following is a 166-amino-acid chain: Protein-export protein SecB (166 aa).

Belongs to the SecB family. As to quaternary structure, homotetramer, a dimer of dimers. One homotetramer interacts with 1 SecA dimer.

Its subcellular location is the cytoplasm. In terms of biological role, one of the proteins required for the normal export of preproteins out of the cell cytoplasm. It is a molecular chaperone that binds to a subset of precursor proteins, maintaining them in a translocation-competent state. It also specifically binds to its receptor SecA. This chain is Protein-export protein SecB, found in Rhizorhabdus wittichii (strain DSM 6014 / CCUG 31198 / JCM 15750 / NBRC 105917 / EY 4224 / RW1) (Sphingomonas wittichii).